Consider the following 125-residue polypeptide: Large ribosomal subunit protein bL12 (125 aa).

Belongs to the bacterial ribosomal protein bL12 family. In terms of assembly, homodimer. Part of the ribosomal stalk of the 50S ribosomal subunit. Forms a multimeric L10(L12)X complex, where L10 forms an elongated spine to which 2 to 4 L12 dimers bind in a sequential fashion. Binds GTP-bound translation factors.

Forms part of the ribosomal stalk which helps the ribosome interact with GTP-bound translation factors. Is thus essential for accurate translation. The protein is Large ribosomal subunit protein bL12 of Azorhizobium caulinodans (strain ATCC 43989 / DSM 5975 / JCM 20966 / LMG 6465 / NBRC 14845 / NCIMB 13405 / ORS 571).